Consider the following 331-residue polypeptide: L-lactate dehydrogenase A chain (331 aa).

NAD(+)-binding positions include 29-57 (GMVG…MEDK) and Arg98. Arg105, Asn137, and Arg168 together coordinate substrate. Position 137 (Asn137) interacts with NAD(+). His192 acts as the Proton acceptor in catalysis. Substrate is bound at residue Thr247.

It belongs to the LDH/MDH superfamily. LDH family. In terms of assembly, homotetramer.

It localises to the cytoplasm. The catalysed reaction is (S)-lactate + NAD(+) = pyruvate + NADH + H(+). The protein operates within fermentation; pyruvate fermentation to lactate; (S)-lactate from pyruvate: step 1/1. Interconverts simultaneously and stereospecifically pyruvate and lactate with concomitant interconversion of NADH and NAD(+). This chain is L-lactate dehydrogenase A chain (ldha), found in Champsocephalus gunnari (Mackerel icefish).